Reading from the N-terminus, the 549-residue chain is Cation/acetate symporter ActP (549 aa).

13 helical membrane passes run 33–53 (WQAI…TYWA), 77–97 (LAIA…ALVF), 103–123 (GLIY…LIAE), 148–168 (ILSA…QMVG), 183–203 (IAVV…GMLA), 206–226 (WVQI…AFMV), 262–282 (ISAL…PHIL), 303–323 (GFMG…IMLV), 355–375 (LFLG…VAGL), 404–424 (VSKI…VLFE), 428–448 (IAFM…PIIL), 464–484 (GGWL…TIWV), and 493–513 (IFPY…GIWF).

It belongs to the sodium:solute symporter (SSF) (TC 2.A.21) family.

The protein resides in the cell inner membrane. In terms of biological role, transports acetate. This is Cation/acetate symporter ActP from Escherichia coli O8 (strain IAI1).